A 255-amino-acid polypeptide reads, in one-letter code: Glucanase inhibitor protein 4 (255 aa).

Residues 1–21 (MKSITTASFALILFGVGAASA) form the signal peptide. The Peptidase S1 domain maps to 29–255 (VLGGGAVPSG…ESLGMDQLGH (227 aa)). A disulfide bond links Cys-56 and Cys-72. 4 N-linked (GlcNAc...) asparagine glycosylation sites follow: Asn-90, Asn-105, Asn-110, and Asn-160. Intrachain disulfides connect Cys-180–Cys-192 and Cys-202–Cys-235.

This sequence belongs to the peptidase S1 family. In terms of assembly, forms an apoplastic complex with host endoglucanases in tomato leaves during P.infestans infection.

It is found in the secreted. In terms of biological role, secreted effector that suppresses host plant glucan elicitor-mediated defense responses. Targets host endoglucanases and inhibits the endoglucanase-mediated release of elicitor-active glucan oligosaccharides from P.infestans cell walls. The chain is Glucanase inhibitor protein 4 from Phytophthora infestans (Potato late blight agent).